Reading from the N-terminus, the 429-residue chain is UDP-N-acetylglucosamine 1-carboxyvinyltransferase (429 aa).

22 to 23 serves as a coordination point for phosphoenolpyruvate; the sequence is KN. Arginine 102 is a binding site for UDP-N-acetyl-alpha-D-glucosamine. Cysteine 126 functions as the Proton donor in the catalytic mechanism. Cysteine 126 carries the 2-(S-cysteinyl)pyruvic acid O-phosphothioketal modification. UDP-N-acetyl-alpha-D-glucosamine contacts are provided by residues 171–174, aspartate 316, and isoleucine 338; that span reads KVSV.

This sequence belongs to the EPSP synthase family. MurA subfamily.

It is found in the cytoplasm. The catalysed reaction is phosphoenolpyruvate + UDP-N-acetyl-alpha-D-glucosamine = UDP-N-acetyl-3-O-(1-carboxyvinyl)-alpha-D-glucosamine + phosphate. It functions in the pathway cell wall biogenesis; peptidoglycan biosynthesis. In terms of biological role, cell wall formation. Adds enolpyruvyl to UDP-N-acetylglucosamine. This is UDP-N-acetylglucosamine 1-carboxyvinyltransferase from Azorhizobium caulinodans (strain ATCC 43989 / DSM 5975 / JCM 20966 / LMG 6465 / NBRC 14845 / NCIMB 13405 / ORS 571).